A 254-amino-acid chain; its full sequence is Cell division protein ZapD (254 aa).

It belongs to the ZapD family. Interacts with FtsZ.

Its subcellular location is the cytoplasm. Its function is as follows. Cell division factor that enhances FtsZ-ring assembly. Directly interacts with FtsZ and promotes bundling of FtsZ protofilaments, with a reduction in FtsZ GTPase activity. This chain is Cell division protein ZapD, found in Idiomarina loihiensis (strain ATCC BAA-735 / DSM 15497 / L2-TR).